Reading from the N-terminus, the 398-residue chain is Riboflavin biosynthesis protein RibBA (398 aa).

The DHBP synthase stretch occupies residues 1 to 199 (MFHPIEEALE…IKDLIEYRYN (199 aa)). D-ribulose 5-phosphate is bound by residues 26 to 27 (RE), Asp-31, 138 to 142 (RAGHT), and Glu-162. Glu-27 lines the Mg(2+) pocket. His-141 provides a ligand contact to Mg(2+). The tract at residues 200–398 (ITTLVNREVD…MKKLGHLLHF (199 aa)) is GTP cyclohydrolase II. Residue 251-255 (RVHSE) coordinates GTP. The Zn(2+) site is built by Cys-256, Cys-267, and Cys-269. GTP-binding positions include Gln-272, 294-296 (EGR), and Thr-316. Residue Asp-328 is the Proton acceptor; for GTP cyclohydrolase activity of the active site. Arg-330 serves as the catalytic Nucleophile; for GTP cyclohydrolase activity. Thr-351 and Lys-356 together coordinate GTP.

The protein in the N-terminal section; belongs to the DHBP synthase family. It in the C-terminal section; belongs to the GTP cyclohydrolase II family. Mg(2+) is required as a cofactor. The cofactor is Mn(2+). Requires Zn(2+) as cofactor.

It catalyses the reaction D-ribulose 5-phosphate = (2S)-2-hydroxy-3-oxobutyl phosphate + formate + H(+). It carries out the reaction GTP + 4 H2O = 2,5-diamino-6-hydroxy-4-(5-phosphoribosylamino)-pyrimidine + formate + 2 phosphate + 3 H(+). The protein operates within cofactor biosynthesis; riboflavin biosynthesis; 2-hydroxy-3-oxobutyl phosphate from D-ribulose 5-phosphate: step 1/1. It participates in cofactor biosynthesis; riboflavin biosynthesis; 5-amino-6-(D-ribitylamino)uracil from GTP: step 1/4. Its function is as follows. Catalyzes the conversion of D-ribulose 5-phosphate to formate and 3,4-dihydroxy-2-butanone 4-phosphate. Functionally, catalyzes the conversion of GTP to 2,5-diamino-6-ribosylamino-4(3H)-pyrimidinone 5'-phosphate (DARP), formate and pyrophosphate. In Bacillus velezensis (strain DSM 23117 / BGSC 10A6 / LMG 26770 / FZB42) (Bacillus amyloliquefaciens subsp. plantarum), this protein is Riboflavin biosynthesis protein RibBA.